The chain runs to 443 residues: Exodeoxyribonuclease 7 large subunit (443 aa).

The protein belongs to the XseA family. As to quaternary structure, heterooligomer composed of large and small subunits.

The protein resides in the cytoplasm. It carries out the reaction Exonucleolytic cleavage in either 5'- to 3'- or 3'- to 5'-direction to yield nucleoside 5'-phosphates.. Its function is as follows. Bidirectionally degrades single-stranded DNA into large acid-insoluble oligonucleotides, which are then degraded further into small acid-soluble oligonucleotides. The chain is Exodeoxyribonuclease 7 large subunit from Legionella pneumophila (strain Corby).